The chain runs to 452 residues: Gamma conglutin 1 (452 aa).

The N-terminal stretch at 1–33 (MAKNMAPILHILVISLSYSFLFVTSSSQNSQSL) is a signal peptide. Residues 61 to 432 (HWGNILKRTP…DLARSRVGFN (372 aa)) form the Peptidase A1 domain. Cystine bridges form between C89–C179, C103–C116, C108–C134, C119–C129, and C353–C394. A glycan (N-linked (GlcNAc...) asparagine) is linked at N131.

It belongs to the peptidase A1 family. In terms of assembly, two-subunit monomeric unit made of alpha and beta subunits coupled by disulfide bonds (at pH 4.5 and under non-reducing conditions). Monomeric alpha and beta subunits in reducing conditions. Can also form oligomers including dimer, tetramer and cyclic hexamer (trimer of dimers) (at pH &gt; 5.5). Component of globulins complexes which accumulate in seeds. Interacts with flavonoids (e.g. apigenin glucosides) present in globulins complexes. Post-translationally, glycosylated on alpha chain at Asn-131; identified N-glycans bound are Man(2)(Xyl)(Fuc)GlcNAc(2), Man(3)(Xyl)(Fuc)GlcNAc(2), GlcNAcMan(3)(Xyl)(Fuc)GlcNAc(2) and GlcNAc(2)Man(3)(Xyl)(Fuc)GlcNAc(2). As to expression, expressed in developing seeds and in the young roots and cotyledons of germinating seeds and young seedlings.

The protein localises to the secreted. It localises to the extracellular space. Its function is as follows. Sulfur-rich seed storage protein that remains undegraded at germination. The uncleaved form exhibits some inhibitory activity against GH11 xylanase from T.longibrachiatum, more at pH 7 than at pH 5.3, but not against GH12 xyloglucan-specific endoglucanase (XEG) from A.aculeatus. Binds to model phospholipid membranes containing dimyristoyl phosphatidylglycerol (DMPG), dioleoyl phosphatidic acid (DOPA) or mixture of dimyristoyl phosphatidylcholine and dimyristoyl phosphatidylglycerol (DMPC:DMPG), or mixture of dioleoyl phosphatidic acid and dioleoyl phosphatidylcholine (DOPC:DOPA). The protein is Gamma conglutin 1 of Lupinus albus (White lupine).